We begin with the raw amino-acid sequence, 421 residues long: Ethanolamine-phosphate cytidylyltransferase (421 aa).

A helical transmembrane segment spans residues 8-28 (IVGSCIVGGAAFAVGASFLHL). Positions 203-227 (SRSSLQRQFSHGHSSPKFEDGASSA) are disordered. Residues 204–215 (RSSLQRQFSHGH) show a composition bias toward polar residues. CTP is bound by residues 262–263 (AF), 270–273 (HVEI), Arg298, 346–349 (HGTV), and 377–381 (SPLDI). The disordered stretch occupies residues 402–421 (AKKEASEKKYYEQKSFVSGD). The span at 403-413 (KKEASEKKYYE) shows a compositional bias: basic and acidic residues. Ser416 carries the post-translational modification Phosphoserine.

Belongs to the cytidylyltransferase family. As to expression, expressed in root tip, lateral root primordia, leaves, shoot apex, stem vascular bundles, pollen and embryos.

The protein resides in the mitochondrion outer membrane. It catalyses the reaction phosphoethanolamine + CTP + H(+) = CDP-ethanolamine + diphosphate. It functions in the pathway phospholipid metabolism; phosphatidylethanolamine biosynthesis; phosphatidylethanolamine from ethanolamine: step 2/3. Its function is as follows. Plays an important role in the biosynthesis of the phospholipid phosphatidylethanolamine. Catalyzes the formation of CDP-ethanolamine. Essential for early embryonic development. This is Ethanolamine-phosphate cytidylyltransferase from Arabidopsis thaliana (Mouse-ear cress).